Consider the following 355-residue polypeptide: Ribosomal RNA small subunit methyltransferase H (355 aa).

Residues 55–57 (GGH), D75, D122, and Q129 each bind S-adenosyl-L-methionine. The interval 327-355 (ERTSQPLPATGAEDFVPAVPGAAEKGRRR) is disordered.

This sequence belongs to the methyltransferase superfamily. RsmH family.

Its subcellular location is the cytoplasm. It carries out the reaction cytidine(1402) in 16S rRNA + S-adenosyl-L-methionine = N(4)-methylcytidine(1402) in 16S rRNA + S-adenosyl-L-homocysteine + H(+). In terms of biological role, specifically methylates the N4 position of cytidine in position 1402 (C1402) of 16S rRNA. The protein is Ribosomal RNA small subunit methyltransferase H of Bordetella avium (strain 197N).